The following is a 479-amino-acid chain: Calcium-dependent mitochondrial ATP-magnesium/phosphate carrier protein 3 (479 aa).

Topologically, residues 1-208 are mitochondrial intermembrane; it reads MESSKPKNRN…ISKHVKRSRL (208 aa). EF-hand domains follow at residues 33 to 68, 69 to 104, 105 to 135, and 136 to 171; these read EREIRIRSLFDFFDNSNLGFLDYAQIEKGLASLQIP, PEYKYARDLFRVCDANRDGRVDYQEFRRYIDAKELE, LYRIFQAIDVEHNGCILPEELWEALVKAGIE, and IDDEELARFVEHVDKDNNGTITFEEWRDFLLLYPHE. Ca(2+) contacts are provided by aspartate 82, asparagine 84, aspartate 86, arginine 88, and glutamate 93. 5 residues coordinate Ca(2+): aspartate 149, aspartate 151, asparagine 153, threonine 155, and glutamate 160. Solcar repeat units follow at residues 203-286, 294-381, and 392-475; these read VKRS…LKPM, IGTS…LKDL, and PGPL…MKKN. The helical transmembrane segment at 209–226 threads the bilayer; sequence LLAGGLAGAVSRTATAPL. The Mitochondrial matrix portion of the chain corresponds to 227–260; it reads DRLKVVLQVQRAHAGVLPTIKKIWREDKLMGFFR. The chain crosses the membrane as a helical span at residues 261 to 280; sequence GNGLNVMKVAPESAIKFCAY. Topologically, residues 281 to 303 are mitochondrial intermembrane; it reads EMLKPMIGGEDGDIGTSGRLMAG. A helical membrane pass occupies residues 304–317; the sequence is GMAGALAQTAIYPM. The Mitochondrial matrix portion of the chain corresponds to 318–355; that stretch reads DLVKTRLQTCVSEGGKAPKLWKLTKDIWVREGPRAFYK. A helical transmembrane segment spans residues 356-375; it reads GLFPSLLGIVPYAGIDLAAY. The Mitochondrial intermembrane segment spans residues 376-397; that stretch reads ETLKDLSRTYILQDTEPGPLIQ. Residues 398-415 traverse the membrane as a helical segment; the sequence is LSCGMTSGALGASCVYPL. Residues 416–449 lie on the Mitochondrial matrix side of the membrane; the sequence is QVVRTRMQADSSKTTMKQEFMNTMKGEGLRGFYR. Residues 450–469 traverse the membrane as a helical segment; sequence GLLPNLLKVVPAASITYIVY. Residues 470-479 are Mitochondrial intermembrane-facing; that stretch reads EAMKKNMALD.

Belongs to the mitochondrial carrier (TC 2.A.29) family. Expressed in flowers, leaves, stems, roots and seedlings, mostly in seedlings.

It localises to the mitochondrion inner membrane. With respect to regulation, counter-exchange transport activity is saturable and inhibited by pyridoxal-5'-phosphate, EDTA and EGTA. Activated by calcium Ca(2+) and manganese Mn(2+) ions, and slightly by iron Fe(2+) and zinc Zn(2+) ions. Repressed by copper ions Cu(2+) and slightly by magnesium Mg(2+) ions. Magnesium Mg(2+) ions promotes slightly ATP uptake, ATP-Mg(2+) being exchanged with ATP(4-). In terms of biological role, calcium-dependent mitochondrial carrier protein that catalyzes the import of ATP co-transported with metal divalent cations across the mitochondrial inner membrane in exchange for phosphate (Pi). Can transport phosphate, AMP, ADP, ATP, adenosine 5'-phosphosulfate, sulfate and thiosulfate, and, to a lesser extent, other nucleotides. Binds calcium ions Ca(2+). Also mediates calcium uptake. The protein is Calcium-dependent mitochondrial ATP-magnesium/phosphate carrier protein 3 of Arabidopsis thaliana (Mouse-ear cress).